A 366-amino-acid polypeptide reads, in one-letter code: MQPYQRLLALGFLLLTLPWGQTSEFQDSDLLQFLGLEKAPSPHRFQPVPRVLRKIIRAREAAAASGASQDLCYVKELGVRGNLLQLLPDQGFFLNTQKPFQDGSCLQKVLYFNLSAIKEKAKLTMAQLTLDLGPRSYYNLRPELVVALSVVQDRGVWGRSHPKVGRLLFLRSVPGPQGQLQFNLQGALKDWSSNRLKNLDLHLEILVKEDRYSRVTVQPENPCDRLLRSLHASLLVVTLNPKHCHPSSRKRRAAISVPKGFCRNFCHRHQLFINFQDLGWHKWVIAPKGFMANYCHGECPFSMTTYLNSSNYAFMQALMHMADPKVPKAVCVPTKLSPISMLYQDSDKNVILRHYEDMVVDECGCG.

The N-terminal stretch at 1-22 (MQPYQRLLALGFLLLTLPWGQT) is a signal peptide. Positions 23–252 (SEFQDSDLLQ…HCHPSSRKRR (230 aa)) are excised as a propeptide. N-linked (GlcNAc...) asparagine glycosylation is found at Asn113 and Asn308. Cystine bridges form between Cys266–Cys331, Cys295–Cys363, and Cys299–Cys365.

It belongs to the TGF-beta family. Homodimer. Heterodimer (Potential). But, in contrast to other members of this family, cannot be disulfide-linked. Synthesized as large precursor molecule that undergo proteolytic cleavage, releasing the pro-domain from the active, receptor binding, C-terminal region of the molecule. As to expression, primarily in adult bone marrow, spleen, thymus and adipose tissue.

The protein resides in the secreted. Its subcellular location is the cytoplasm. Growth factor involved in early embryonic development and adipose-tissue homeostasis. During embryogenesis controls formation of anterior visceral endoderm and mesoderm and the establishment of anterior-posterior identity through a receptor complex comprising the receptor ACVR1B and the coreceptor CRIPTO. Regulates adipose-tissue homeostasis and energy balance under nutrient overload in part by signaling through the receptor complex based on ACVR1C and CRIPTO. The polypeptide is Growth/differentiation factor 3 (Gdf3) (Mus musculus (Mouse)).